We begin with the raw amino-acid sequence, 854 residues long: V-type proton ATPase 116 kDa subunit a 2 (854 aa).

The Cytoplasmic portion of the chain corresponds to 1–393; the sequence is MGSLFRSETM…DAYGVGSYQE (393 aa). Residues 394-412 form a helical membrane-spanning segment; it reads VNPALFTIITFPFLFAVMF. The Vacuolar segment spans residues 413–414; the sequence is GD. Residues 415–431 traverse the membrane as a helical segment; it reads FGHGFVMFLFALLLVLN. The Cytoplasmic portion of the chain corresponds to 432-445; sequence ENHPRLNQSQEIMR. A helical membrane pass occupies residues 446 to 475; that stretch reads MFFNGRYILLLMGLFSVYTGLIYNDCFSKS. At 476–549 the chain is on the vacuolar side; it reads VNLFGSRWNV…ATNRLTFLNS (74 aa). Residues 550 to 569 traverse the membrane as a helical segment; the sequence is FKMKMSVILGITHMTFGVIL. Over 570 to 587 the chain is Cytoplasmic; the sequence is GIFNHLHFRKKFNICLVS. Residues 588–608 traverse the membrane as a helical segment; that stretch reads IPELLFMLCIFGYLIFMIIYK. Over 609 to 651 the chain is Vacuolar; sequence WLVYSAETSRTAPSILIEFISMFLFLASDTGGLYPGQEHVQRL. Residues 652–671 traverse the membrane as a helical segment; the sequence is LLLITVLSVPVLFLGKPLFL. The Cytoplasmic segment spans residues 672–739; it reads LWLHRGRSCF…EILMTQIIHS (68 aa). 2 positions are modified to phosphoserine: S695 and S700. A helical transmembrane segment spans residues 740–764; sequence IEYCLGCISNTASYLRLWALSLAHA. Residues 765–785 lie on the Vacuolar side of the membrane; that stretch reads QLSEVLWAMLMHVGLRVDTAY. A helical membrane pass occupies residues 786–824; it reads GVLVLLPVIAFFAVLTIFILLIMEGLSAFLHAIRLHWVE. Residues 825–854 lie on the Cytoplasmic side of the membrane; the sequence is FQNKFYVGAGTKFVPFSFRLLSSKFSDDLA.

It belongs to the V-ATPase 116 kDa subunit family. V-ATPase is a heteromultimeric enzyme made up of two complexes: the ATP-hydrolytic V1 complex and the proton translocation V0 complex. The V1 complex consists of three catalytic AB heterodimers that form a heterohexamer, three peripheral stalks each consisting of EG heterodimers, one central rotor including subunits D and F, and the regulatory subunits C and H. The proton translocation complex V0 consists of the proton transport subunit a, a ring of proteolipid subunits c9c'', rotary subunit d, subunits e and f, and the accessory subunits ATP6AP1/Ac45 and ATP6AP2/PRR. Directly interacts with PSCD2 through its N-terminal cytosolic tail in an intra-endosomal acidification-dependent manner. Disruption of this interaction results in the inhibition of endocytosis. Interacts with SPAAR. As to expression, highly expressed in lung, kidney and spleen.

It localises to the cell membrane. Its subcellular location is the endosome membrane. Functionally, subunit of the V0 complex of vacuolar(H+)-ATPase (V-ATPase), a multisubunit enzyme composed of a peripheral complex (V1) that hydrolyzes ATP and a membrane integral complex (V0) that translocates protons. V-ATPase is responsible for acidifying and maintaining the pH of intracellular compartments and in some cell types, is targeted to the plasma membrane, where it is responsible for acidifying the extracellular environment. Essential component of the endosomal pH-sensing machinery. May play a role in maintaining the Golgi functions, such as glycosylation maturation, by controlling the Golgi pH. In aerobic conditions, involved in intracellular iron homeostasis, thus triggering the activity of Fe(2+) prolyl hydroxylase (PHD) enzymes, and leading to HIF1A hydroxylation and subsequent proteasomal degradation. This Bos taurus (Bovine) protein is V-type proton ATPase 116 kDa subunit a 2 (ATP6V0A2).